A 108-amino-acid polypeptide reads, in one-letter code: DNA-binding protein HBbu (108 aa).

It belongs to the bacterial histone-like protein family.

Its function is as follows. Histone-like DNA-binding protein which is capable of wrapping DNA to stabilize it, and thus to prevent its denaturation under extreme environmental conditions. This Borrelia garinii subsp. bavariensis (strain ATCC BAA-2496 / DSM 23469 / PBi) (Borreliella bavariensis) protein is DNA-binding protein HBbu (hbb).